The sequence spans 792 residues: Kinesin-like protein KIF3C (792 aa).

In terms of domain architecture, Kinesin motor spans 10-363; the sequence is ALKVVARCRP…LRFANRAKNI (354 aa). 97–104 contributes to the ATP binding site; the sequence is GQTGTGKT. 3 disordered regions span residues 249–287, 397–418, and 749–792; these read GSERQNKAGPNTTGGTATQPTGGGGGGGGGGGGGERPKE, MLGKRLRRKSSRRKKAVSAPAG, and RPST…LDHE. Over residues 257 to 268 the composition is skewed to low complexity; it reads GPNTTGGTATQP. Gly residues predominate over residues 269–282; that stretch reads TGGGGGGGGGGGGG. Positions 374–627 form a coiled coil; the sequence is KDTLLREFQE…QNEQTRELKL (254 aa). A compositionally biased stretch (basic residues) spans 397–412; sequence MLGKRLRRKSSRRKKA. The globular stretch occupies residues 628–792; the sequence is KYLIIENFIP…LRPTTVLDHE (165 aa). Positions 773–792 are enriched in low complexity; sequence AHASLAASAALRPTTVLDHE.

It belongs to the TRAFAC class myosin-kinesin ATPase superfamily. Kinesin family. Kinesin II subfamily. As to quaternary structure, heterodimer of KIF3A and KIF3C.

The protein resides in the cytoplasm. It localises to the cytoskeleton. In terms of biological role, microtubule-based anterograde translocator for membranous organelles. This Bos taurus (Bovine) protein is Kinesin-like protein KIF3C (KIF3C).